We begin with the raw amino-acid sequence, 423 residues long: CinA-like protein (423 aa).

Belongs to the CinA family.

The sequence is that of CinA-like protein from Synechococcus sp. (strain CC9311).